Consider the following 325-residue polypeptide: Cytochrome c1, heme protein, mitochondrial (325 aa).

A mitochondrion-targeting transit peptide spans 1–84; the sequence is MAAAAASLRR…AVALHSAVSA (84 aa). Residues 85–287 lie on the Mitochondrial intermembrane side of the membrane; sequence SDLELHPPSY…SEPEHDHRKR (203 aa). Residues 108 to 209 enclose the Cytochrome c domain; that stretch reads TSIRRGFQVY…IVRARHGGED (102 aa). 4 residues coordinate heme c: Cys121, Cys124, His125, and Met244. A helical transmembrane segment spans residues 288–308; it reads MGLKMLLMMGLLLPLTYAMKR. Over 309-325 the chain is Mitochondrial matrix; it reads HKWSVLKSRKLAYRPPK.

The protein belongs to the cytochrome c family. As to quaternary structure, component of the ubiquinol-cytochrome c oxidoreductase (cytochrome b-c1 complex, complex III, CIII), a multisubunit enzyme composed of 11 subunits. The complex is composed of 3 respiratory subunits cytochrome b, cytochrome c1 and Rieske protein UQCRFS1, 2 core protein subunits UQCRC1/QCR1 and UQCRC2/QCR2, and 6 low-molecular weight protein subunits UQCRH/QCR6, UQCRB/QCR7, UQCRQ/QCR8, UQCR10/QCR9, UQCR11/QCR10 and subunit 9, the cleavage product of Rieske protein UQCRFS1. The complex exists as an obligatory dimer and forms supercomplexes (SCs) in the inner mitochondrial membrane with NADH-ubiquinone oxidoreductase (complex I, CI) and cytochrome c oxidase (complex IV, CIV), resulting in different assemblies (supercomplex SCI(1)III(2)IV(1) and megacomplex MCI(2)III(2)IV(2)). Interacts with FLVCR2; this interaction occurs in the absence of heme and is disrupted upon heme binding. It depends on heme c as a cofactor.

The protein resides in the mitochondrion inner membrane. It catalyses the reaction a quinol + 2 Fe(III)-[cytochrome c](out) = a quinone + 2 Fe(II)-[cytochrome c](out) + 2 H(+)(out). In terms of biological role, component of the ubiquinol-cytochrome c oxidoreductase, a multisubunit transmembrane complex that is part of the mitochondrial electron transport chain which drives oxidative phosphorylation. The respiratory chain contains 3 multisubunit complexes succinate dehydrogenase (complex II, CII), ubiquinol-cytochrome c oxidoreductase (cytochrome b-c1 complex, complex III, CIII) and cytochrome c oxidase (complex IV, CIV), that cooperate to transfer electrons derived from NADH and succinate to molecular oxygen, creating an electrochemical gradient over the inner membrane that drives transmembrane transport and the ATP synthase. The cytochrome b-c1 complex catalyzes electron transfer from ubiquinol to cytochrome c, linking this redox reaction to translocation of protons across the mitochondrial inner membrane, with protons being carried across the membrane as hydrogens on the quinol. In the process called Q cycle, 2 protons are consumed from the matrix, 4 protons are released into the intermembrane space and 2 electrons are passed to cytochrome c. Cytochrome c1 is a catalytic core subunit containing a c-type heme. It transfers electrons from the [2Fe-2S] iron-sulfur cluster of the Rieske protein to cytochrome c. The chain is Cytochrome c1, heme protein, mitochondrial (Cyc1) from Mus musculus (Mouse).